Here is a 100-residue protein sequence, read N- to C-terminus: NADH-quinone oxidoreductase subunit K (100 aa).

The next 3 helical transmembrane spans lie at 1–21, 28–48, and 64–84; these read MIGLNHYLIVSGLLFCIGLAG, ILLLFFSTEIMLNAINIGFIA, and FIIAIAASEVAIGLGLVILWF.

This sequence belongs to the complex I subunit 4L family. As to quaternary structure, NDH-1 is composed of 14 different subunits. Subunits NuoA, H, J, K, L, M, N constitute the membrane sector of the complex.

It localises to the cell inner membrane. The enzyme catalyses a quinone + NADH + 5 H(+)(in) = a quinol + NAD(+) + 4 H(+)(out). NDH-1 shuttles electrons from NADH, via FMN and iron-sulfur (Fe-S) centers, to quinones in the respiratory chain. The immediate electron acceptor for the enzyme in this species is believed to be ubiquinone. Couples the redox reaction to proton translocation (for every two electrons transferred, four hydrogen ions are translocated across the cytoplasmic membrane), and thus conserves the redox energy in a proton gradient. The protein is NADH-quinone oxidoreductase subunit K of Helicobacter acinonychis (strain Sheeba).